The sequence spans 882 residues: Alanine--tRNA ligase (882 aa).

Zn(2+)-binding residues include H571, H575, C673, and H677.

It belongs to the class-II aminoacyl-tRNA synthetase family. It depends on Zn(2+) as a cofactor.

The protein resides in the cytoplasm. The enzyme catalyses tRNA(Ala) + L-alanine + ATP = L-alanyl-tRNA(Ala) + AMP + diphosphate. In terms of biological role, catalyzes the attachment of alanine to tRNA(Ala) in a two-step reaction: alanine is first activated by ATP to form Ala-AMP and then transferred to the acceptor end of tRNA(Ala). Also edits incorrectly charged Ser-tRNA(Ala) and Gly-tRNA(Ala) via its editing domain. This chain is Alanine--tRNA ligase, found in Stenotrophomonas maltophilia (strain K279a).